The sequence spans 236 residues: Concanavalin-Ma (236 aa).

Glu8 and Asp10 together coordinate Mn(2+). Residues Asp10, Tyr12, Asn14, and Asp19 each contribute to the Ca(2+) site. Tyr12 lines the a carbohydrate pocket. Residues Asp19 and His24 each coordinate Mn(2+). 98–99 (LY) is a binding site for a carbohydrate. Asp207 is a binding site for Ca(2+). Arg227 contacts a carbohydrate.

This sequence belongs to the leguminous lectin family. Homotetramer.

In terms of biological role, glucose/D-mannose specific lectin. The polypeptide is Concanavalin-Ma (Canavalia rosea (Beach bean)).